Reading from the N-terminus, the 288-residue chain is Phospholipid phosphatase 2 (288 aa).

Residues methionine 1 to arginine 4 are Cytoplasmic-facing. A helical membrane pass occupies residues tryptophan 5–leucine 25. The Lumenal segment spans residues threonine 26 to threonine 51. A helical transmembrane segment spans residues isoleucine 52–glycine 72. The Cytoplasmic segment spans residues glutamate 73–aspartate 87. The chain crosses the membrane as a helical span at residues phenylalanine 88–valine 108. Topologically, residues serine 109–leucine 162 are lumenal. The phosphatase sequence motif I stretch occupies residues lysine 117–proline 125. Asparagine 139 carries an N-linked (GlcNAc...) asparagine glycan. The chain crosses the membrane as a helical span at residues serine 163–valine 183. The phosphatase sequence motif II stretch occupies residues tyrosine 165–histidine 168. Histidine 168 serves as the catalytic Proton donors. Residues glutamine 184–arginine 196 lie on the Cytoplasmic side of the membrane. Residues proline 197–aspartate 217 form a helical membrane-spanning segment. The phosphatase sequence motif III stretch occupies residues threonine 213 to aspartate 224. The Lumenal portion of the chain corresponds to tyrosine 218 to leucine 226. Histidine 220 serves as the catalytic Nucleophile. Residues valine 227–phenylalanine 247 traverse the membrane as a helical segment. Over lysine 248–serine 288 the chain is Cytoplasmic.

The protein belongs to the PA-phosphatase related phosphoesterase family. In terms of assembly, forms functional homodimers and homooligomers. Can also form heterooligomers with PLPP1 and PLPP3. N-glycosylated. Found mainly in brain, pancreas and placenta.

It is found in the membrane. The protein resides in the cell membrane. The protein localises to the early endosome membrane. It localises to the endoplasmic reticulum membrane. The catalysed reaction is a 1,2-diacyl-sn-glycero-3-phosphate + H2O = a 1,2-diacyl-sn-glycerol + phosphate. The enzyme catalyses 1,2-dihexadecanoyl-sn-glycero-3-phosphate + H2O = 1,2-dihexadecanoyl-sn-glycerol + phosphate. It carries out the reaction 1,2-di-(9Z-octadecenoyl)-sn-glycero-3-phosphate + H2O = 1,2-di-(9Z-octadecenoyl)-sn-glycerol + phosphate. It catalyses the reaction a monoacyl-sn-glycero-3-phosphate + H2O = a monoacylglycerol + phosphate. The catalysed reaction is (9Z)-octadecenoyl-sn-glycero-3-phosphate + H2O = (9Z-octadecenoyl)-glycerol + phosphate. The enzyme catalyses sphing-4-enine 1-phosphate + H2O = sphing-4-enine + phosphate. It carries out the reaction an N-acylsphing-4-enine 1-phosphate + H2O = an N-acylsphing-4-enine + phosphate. It catalyses the reaction N-(octanoyl)-sphing-4-enine-1-phosphate + H2O = N-octanoylsphing-4-enine + phosphate. The catalysed reaction is N-(9Z-octadecenoyl)-ethanolamine phosphate + H2O = N-(9Z-octadecenoyl) ethanolamine + phosphate. Its pathway is lipid metabolism; phospholipid metabolism. With respect to regulation, magnesium-independent phospholipid phosphatase. Insensitive to N-ethylmaleimide. Inhibited by sphingosine, zinc ions and modestly by propanolol. Functionally, magnesium-independent phospholipid phosphatase that catalyzes the dephosphorylation of a variety of glycerolipid and sphingolipid phosphate esters including phosphatidate/PA, lysophosphatidate/LPA, sphingosine 1-phosphate/S1P and ceramide 1-phosphate/C1P. Has no apparent extracellular phosphatase activity and therefore most probably acts intracellularly. Also acts on N-oleoyl ethanolamine phosphate/N-(9Z-octadecenoyl)-ethanolamine phosphate, a potential physiological compound. Through dephosphorylation of these bioactive lipid mediators produces new bioactive compounds and may regulate signal transduction in different cellular processes. Indirectly regulates, for instance, cell cycle G1/S phase transition through its phospholipid phosphatase activity. This Homo sapiens (Human) protein is Phospholipid phosphatase 2.